A 132-amino-acid polypeptide reads, in one-letter code: UPF0299 membrane protein YohJ (132 aa).

Transmembrane regions (helical) follow at residues 8–28 (IWQY…GIFI), 31–51 (LLPV…VLLA), 63–83 (GCYL…VGVM), and 93–113 (FGPV…VVSW).

This sequence belongs to the UPF0299 family.

The protein localises to the cell inner membrane. The protein is UPF0299 membrane protein YohJ of Escherichia fergusonii (strain ATCC 35469 / DSM 13698 / CCUG 18766 / IAM 14443 / JCM 21226 / LMG 7866 / NBRC 102419 / NCTC 12128 / CDC 0568-73).